Here is a 316-residue protein sequence, read N- to C-terminus: MPMQGAHRKLLGSLNSTPTATSNLGLAANHTGAPCLEVSIPDGLFLSLGLVSLVENVLVVAAIAKNRNLHSSMYCFICCLALSDLLVSGSNMLETAVILLLEAGALATRTSVVQQLHNTIDVLTCSSMLCSLCFLGAIAVDRYISIFYALRYHSIMTLPRAQRAIAAIWVASVLSSTLFITYYDHAAVLLCLVVFFLAMLVLMAVLYVHMLARACQHAHGIIRLHKRQSPAHQGFGLRGAATLTILLGIFFLCWGPFFLHLTLVVFCPQHLTCSCIFKNFKVFLTLIICNTIIDPLIYAFRSQELRRTLKEVLCSW.

The Extracellular portion of the chain corresponds to 1-37 (MPMQGAHRKLLGSLNSTPTATSNLGLAANHTGAPCLE). The N-linked (GlcNAc...) asparagine glycan is linked to Asn29. Residues 38–63 (VSIPDGLFLSLGLVSLVENVLVVAAI) traverse the membrane as a helical segment. At 64–72 (AKNRNLHSS) the chain is on the cytoplasmic side. Residues 73–93 (MYCFICCLALSDLLVSGSNML) form a helical membrane-spanning segment. Residues 94–118 (ETAVILLLEAGALATRTSVVQQLHN) are Extracellular-facing. Residues 119 to 140 (TIDVLTCSSMLCSLCFLGAIAV) traverse the membrane as a helical segment. Topologically, residues 141–163 (DRYISIFYALRYHSIMTLPRAQR) are cytoplasmic. The helical transmembrane segment at 164-183 (AIAAIWVASVLSSTLFITYY) threads the bilayer. The Extracellular portion of the chain corresponds to 184–191 (DHAAVLLC). A helical membrane pass occupies residues 192-211 (LVVFFLAMLVLMAVLYVHML). Over 212-240 (ARACQHAHGIIRLHKRQSPAHQGFGLRGA) the chain is Cytoplasmic. A helical membrane pass occupies residues 241 to 266 (ATLTILLGIFFLCWGPFFLHLTLVVF). Topologically, residues 267–279 (CPQHLTCSCIFKN) are extracellular. A helical transmembrane segment spans residues 280–300 (FKVFLTLIICNTIIDPLIYAF). Residues 301 to 316 (RSQELRRTLKEVLCSW) are Cytoplasmic-facing. A lipid anchor (S-palmitoyl cysteine) is attached at Cys314.

Belongs to the G-protein coupled receptor 1 family. In terms of assembly, interacts with MGRN1, but does not undergo MGRN1-mediated ubiquitination; this interaction competes with GNAS-binding and thus inhibits agonist-induced cAMP production. Interacts with OPN3; the interaction results in a decrease in MC1R-mediated cAMP signaling and ultimately a decrease in melanin production in melanocytes.

The protein resides in the cell membrane. Its function is as follows. Receptor for MSH (alpha, beta and gamma) and ACTH. The activity of this receptor is mediated by G proteins which activate adenylate cyclase. Mediates melanogenesis, the production of eumelanin (black/brown) and phaeomelanin (red/yellow), via regulation of cAMP signaling in melanocytes. This Leontocebus fuscicollis (Brown-mantled tamarin) protein is Melanocyte-stimulating hormone receptor (MC1R).